The primary structure comprises 401 residues: MATTILPLILFISSLAIASSSPSRTPHAIVNEVHKSINASRRNLGYLSCGTGNPIDDCWRCDPNWANNRQRLADCAIGFGKNAMGGRNGRIYVVTDPGNDDPVNPVPGTLRYAVIQDEPLWIIFKRDMVIQLRQELVMNSHKTIDGRGVNVHIGNGPCITIHYASNIIIHGIHIHDCKQAGNGNIRNSPHHSGWWTQSDGDGISIFASKDIWIDHNSLSNCHDGLIDAIHGSTAITISNNYMTHHDKVMLLGHSDSYTQDKNMQVTIAFNHFGEGLVQRMPRCRHGYFHVVNNDYTHWEMYAIGGSASPTIYSQGNRFLAPNTRFDKEVTKHENAPESEWKNWNWRSEGDLMLNGAYFRESGGRAASSFARASSLSGRPSTLVASMTRSAGALVCRKGSRC.

A signal peptide spans 1 to 20 (MATTILPLILFISSLAIASS). N-linked (GlcNAc...) asparagine glycosylation is present at Asn38. Ca(2+) is bound by residues Asp199, Asp223, and Asp227. Residue Arg279 is part of the active site.

It belongs to the polysaccharide lyase 1 family. Ca(2+) is required as a cofactor. In terms of tissue distribution, expressed in sites of vascular differentiation and in new primordia on the flank of the shoot meristem.

The enzyme catalyses Eliminative cleavage of (1-&gt;4)-alpha-D-galacturonan to give oligosaccharides with 4-deoxy-alpha-D-galact-4-enuronosyl groups at their non-reducing ends.. Its pathway is glycan metabolism; pectin degradation; 2-dehydro-3-deoxy-D-gluconate from pectin: step 2/5. In terms of biological role, involved in the degradation of pectin. May assist in the removal and modification of an existing pectin matrix in order to allow the deposition of newly synthesized walls polymers for a specialized function or to create an architecture that is extensible. The protein is Pectate lyase of Zinnia elegans (Garden zinnia).